We begin with the raw amino-acid sequence, 343 residues long: Dihydroorotase (343 aa).

Zn(2+) contacts are provided by H13 and H15. Substrate-binding positions include 15-17 and N41; that span reads HLR. Residues K99, H136, and H174 each contribute to the Zn(2+) site. K99 is subject to N6-carboxylysine. H136 contacts substrate. L219 is a binding site for substrate. A Zn(2+)-binding site is contributed by D247. D247 is an active-site residue. The substrate site is built by H251 and A263.

This sequence belongs to the metallo-dependent hydrolases superfamily. DHOase family. Class II DHOase subfamily. As to quaternary structure, homodimer. Zn(2+) is required as a cofactor.

The catalysed reaction is (S)-dihydroorotate + H2O = N-carbamoyl-L-aspartate + H(+). Its pathway is pyrimidine metabolism; UMP biosynthesis via de novo pathway; (S)-dihydroorotate from bicarbonate: step 3/3. Catalyzes the reversible cyclization of carbamoyl aspartate to dihydroorotate. The sequence is that of Dihydroorotase from Alkalilimnicola ehrlichii (strain ATCC BAA-1101 / DSM 17681 / MLHE-1).